The sequence spans 1028 residues: Sodium/potassium-transporting ATPase subunit alpha-4 (1028 aa).

The disordered stretch occupies residues M1–D36. The Cytoplasmic segment spans residues M1–P92. Positions P87–P89 are interaction with phosphoinositide-3 kinase. A helical transmembrane segment spans residues E93 to S113. At L114–Y137 the chain is on the extracellular side. Residues L138–A158 traverse the membrane as a helical segment. Over K159–I294 the chain is Cytoplasmic. A helical transmembrane segment spans residues E295 to F314. Topologically, residues L315–A326 are extracellular. The chain crosses the membrane as a helical span at residues V327–A344. The Cytoplasmic segment spans residues T345–L777. D382 (4-aspartylphosphate intermediate) is an active-site residue. Residues D722 and D726 each contribute to the Mg(2+) site. The chain crosses the membrane as a helical span at residues K778–L797. Residues F798–L807 lie on the Extracellular side of the membrane. The chain crosses the membrane as a helical span at residues G808–A828. Over Y829–N848 the chain is Cytoplasmic. Residues L849–F871 form a helical membrane-spanning segment. Topologically, residues F872 to C923 are extracellular. Residues Q924–K943 traverse the membrane as a helical segment. The Cytoplasmic segment spans residues T944–N956. Position 948 is a phosphoserine; by PKA (S948). The helical transmembrane segment at K957 to Y975 threads the bilayer. The Extracellular portion of the chain corresponds to I976 to I990. Residues N991–K1011 form a helical membrane-spanning segment. Over L1012 to Y1028 the chain is Cytoplasmic.

It belongs to the cation transport ATPase (P-type) (TC 3.A.3) family. Type IIC subfamily. As to quaternary structure, the sodium/potassium-transporting ATPase is composed of a catalytic alpha subunit, an auxiliary non-catalytic beta subunit and an additional regulatory subunit.

It localises to the cell membrane. The enzyme catalyses K(+)(out) + Na(+)(in) + ATP + H2O = K(+)(in) + Na(+)(out) + ADP + phosphate + H(+). Its activity is regulated as follows. Specifically inhibited by an endogenous cardiac glycoside, ouabain. Its function is as follows. This is the catalytic component of the active enzyme, which catalyzes the hydrolysis of ATP coupled with the exchange of sodium and potassium ions across the plasma membrane. This action creates the electrochemical gradient of sodium and potassium ions, providing the energy for active transport of various nutrients. Plays a role in sperm motility. The protein is Sodium/potassium-transporting ATPase subunit alpha-4 (Atp1a4) of Rattus norvegicus (Rat).